The chain runs to 441 residues: UDP-N-acetylmuramoylalanine--D-glutamate ligase (441 aa).

112–118 (GTNGKTT) is an ATP binding site.

Belongs to the MurCDEF family.

It is found in the cytoplasm. The catalysed reaction is UDP-N-acetyl-alpha-D-muramoyl-L-alanine + D-glutamate + ATP = UDP-N-acetyl-alpha-D-muramoyl-L-alanyl-D-glutamate + ADP + phosphate + H(+). It functions in the pathway cell wall biogenesis; peptidoglycan biosynthesis. Cell wall formation. Catalyzes the addition of glutamate to the nucleotide precursor UDP-N-acetylmuramoyl-L-alanine (UMA). The polypeptide is UDP-N-acetylmuramoylalanine--D-glutamate ligase (Gloeobacter violaceus (strain ATCC 29082 / PCC 7421)).